A 142-amino-acid chain; its full sequence is Large ribosomal subunit protein uL13 (142 aa).

The protein belongs to the universal ribosomal protein uL13 family. Part of the 50S ribosomal subunit.

This protein is one of the early assembly proteins of the 50S ribosomal subunit, although it is not seen to bind rRNA by itself. It is important during the early stages of 50S assembly. The protein is Large ribosomal subunit protein uL13 of Aeromonas salmonicida (strain A449).